The chain runs to 484 residues: Synaptic vesicle membrane protein VAT-1 homolog (484 aa).

Low complexity-rich tracts occupy residues 1–13 and 40–61; these read MSGE…QQNA and SAST…PAAE. Disordered regions lie at residues 1-65 and 402-484; these read MSGE…KAPE and IGKI…KEEN. Over residues 411–484 the composition is skewed to basic and acidic residues; it reads PMKEEEKKEE…KKEEVKKEEN (74 aa).

The protein belongs to the zinc-containing alcohol dehydrogenase family. Quinone oxidoreductase subfamily.

This chain is Synaptic vesicle membrane protein VAT-1 homolog, found in Danio rerio (Zebrafish).